The chain runs to 345 residues: Protein SHI RELATED SEQUENCE 7 (345 aa).

The interval 7-28 (LGGRDHNKQDHHQEKDHNEDKS) is disordered. Over residues 9–28 (GRDHNKQDHHQEKDHNEDKS) the composition is skewed to basic and acidic residues. Residues Cys119, Cys122, Cys130, Cys135, Cys139, and Cys146 each coordinate Zn(2+). The zn(2)-C6 fungal-type; degenerate DNA-binding region spans 119–146 (CQDCGNQAKKDCPHMRCRTCCKSRGFDC). The interval 168–200 (AVLPAKRIRDANSRGGGDDDDDDKEDEKNDSCG) is disordered. Residues 256–259 (IGGH) carry the Required for homo- and heterodimerization motif.

This sequence belongs to the SHI protein family. As to expression, mainly expressed in the filaments of flowers, the shoot apex regions and pollen. Also present in leaves.

The protein localises to the nucleus. In terms of biological role, transcription activator that binds DNA on 5'-ACTCTAC-3' and promotes auxin homeostasis-regulating gene expression (e.g. YUC genes), as well as genes affecting stamen development, cell expansion and timing of flowering. Synergistically with other SHI-related proteins, regulates gynoecium, stamen and leaf development in a dose-dependent manner, controlling apical-basal patterning. Promotes style and stigma formation, and influences vascular development during gynoecium development. May also have a role in the formation and/or maintenance of the shoot apical meristem (SAM). Regulates anther dehiscence and floral development. The sequence is that of Protein SHI RELATED SEQUENCE 7 (SRS7) from Arabidopsis thaliana (Mouse-ear cress).